A 61-amino-acid chain; its full sequence is Large ribosomal subunit protein uL30 (61 aa).

It belongs to the universal ribosomal protein uL30 family. In terms of assembly, part of the 50S ribosomal subunit.

The sequence is that of Large ribosomal subunit protein uL30 from Bordetella avium (strain 197N).